The sequence spans 129 residues: Capsid protein (129 aa).

The viral RNA-binding stretch occupies residues 31-104 (EWISSNSRSQ…FATNSDCELI (74 aa)).

Belongs to the Leviviricetes capsid protein family. Homodimer. The capsid proteins form dimers that assemble by group of 5. Twelve such pentamers are linked together with free dimers. The homodimers binds to the viral RNA via an operator hairpin, but also to many other RNA sequences in the viral genome; this interaction probably shifts the virus from the replicative to the assembly phase and ensures specific encapsidation of the viral genome.

It localises to the virion. Capsid protein self-assembles to form an icosahedral capsid with a T=3 symmetry, about 26 nm in diameter, and consisting of 89 capsid proteins dimers (178 capsid proteins). Involved in viral genome encapsidation through the interaction between a capsid protein dimer and the multiple packaging signals present in the RNA genome. The capsid also contains 1 copy of the A2 maturation protein. In terms of biological role, acts as a translational repressor of viral replicase synthesis late in infection. This latter function is the result of capsid protein interaction with an RNA hairpin which contains the replicase ribosome-binding site. The chain is Capsid protein from Escherichia coli (Bacteriophage R17).